The primary structure comprises 378 residues: Alanine racemase (378 aa).

The active-site Proton acceptor; specific for D-alanine is lysine 40. Lysine 40 is modified (N6-(pyridoxal phosphate)lysine). A substrate-binding site is contributed by arginine 140. Residue tyrosine 270 is the Proton acceptor; specific for L-alanine of the active site. Methionine 317 is a binding site for substrate.

This sequence belongs to the alanine racemase family. It depends on pyridoxal 5'-phosphate as a cofactor.

The catalysed reaction is L-alanine = D-alanine. It functions in the pathway amino-acid biosynthesis; D-alanine biosynthesis; D-alanine from L-alanine: step 1/1. Functionally, catalyzes the interconversion of L-alanine and D-alanine. May also act on other amino acids. The chain is Alanine racemase (alr) from Lacticaseibacillus casei (strain BL23) (Lactobacillus casei).